Consider the following 444-residue polypeptide: Homocysteine/cysteine synthase (444 aa).

Phosphoserine is present on Ser-44. A Glycyl lysine isopeptide (Lys-Gly) (interchain with G-Cter in ubiquitin) cross-link involves residue Lys-160. N6-(pyridoxal phosphate)lysine is present on Lys-209.

This sequence belongs to the trans-sulfuration enzymes family. In terms of assembly, homotetramer. Requires pyridoxal 5'-phosphate as cofactor.

It is found in the cytoplasm. The enzyme catalyses O-acetyl-L-homoserine + methanethiol = L-methionine + acetate + H(+). It catalyses the reaction O-acetyl-L-homoserine + hydrogen sulfide = L-homocysteine + acetate. The catalysed reaction is O-acetyl-L-serine + hydrogen sulfide = L-cysteine + acetate. It functions in the pathway amino-acid biosynthesis; L-methionine biosynthesis via de novo pathway; L-homocysteine from O-acetyl-L-homoserine. Functionally, catalyzes the conversion of O-acetyl-L-homoserine (OAH) into homocysteine in the methionine biosynthesis pathway. Required to efficiently reduce toxic levels of hydrogen sulfide generated when the sulfate assimilation pathway (SAP) is active. Also catalyzes the conversion of O-acetylserine (OAS) into cysteine, the last step in the cysteine biosynthesis pathway. However, it seems that in S.cerevisiae cysteine biosynthesis occurs exclusively through the cystathionine pathway and not via direct incorporation of sulfur into OAS. It therefore has no metabolic role in cysteine biosynthesis and may only have a regulatory role controlling OAS levels. The sequence is that of Homocysteine/cysteine synthase from Saccharomyces cerevisiae (strain ATCC 204508 / S288c) (Baker's yeast).